The following is a 201-amino-acid chain: MQIYVSGIHTDVGKTHFSAAFCANFNYDYFKLIQAGTPTDSEFIAKFSPKTKIFKEGIFLQTPASPHLGKIKEKLDYKALDIILPKSKNLLIELAGGLFSPMDENYTMIDFVNIFKHPTILVAKYYLGSINHILLSIEALKQRNINLLALVMMGKKDILQDDFIKNYAKIPIINLDFFDENSILNKDFKEQMQEILQLKIP.

11–16 (DVGKTH) contacts ATP. Thr15 is a binding site for Mg(2+). The active site involves Lys31. ATP contacts are provided by residues Asp40 and 93-96 (ELAG). Residues Asp40 and Glu93 each coordinate Mg(2+).

It belongs to the dethiobiotin synthetase family. As to quaternary structure, homodimer. Mg(2+) is required as a cofactor.

The protein resides in the cytoplasm. It carries out the reaction (7R,8S)-7,8-diammoniononanoate + CO2 + ATP = (4R,5S)-dethiobiotin + ADP + phosphate + 3 H(+). It participates in cofactor biosynthesis; biotin biosynthesis; biotin from 7,8-diaminononanoate: step 1/2. Functionally, catalyzes a mechanistically unusual reaction, the ATP-dependent insertion of CO2 between the N7 and N8 nitrogen atoms of 7,8-diaminopelargonic acid (DAPA, also called 7,8-diammoniononanoate) to form a ureido ring. The sequence is that of ATP-dependent dethiobiotin synthetase BioD from Campylobacter jejuni subsp. jejuni serotype O:6 (strain 81116 / NCTC 11828).